The primary structure comprises 397 residues: pH-sensitive adenylate cyclase MT1302 (397 aa).

The segment at 1–191 (MTDHVREADD…IQDMLFMQLR (191 aa)) is regulatory domain. The tract at residues 192–206 (HMMETEAVNAGERAA) is linker. The catalytic domain stretch occupies residues 211–397 (PGARQVTVAF…QDDDLAGSSP (187 aa)). A Guanylate cyclase domain is found at 217-325 (TVAFADLVGF…SPVNVASRVT (109 aa)). Asp222 is a binding site for Mn(2+). Residue Lys261 participates in substrate binding. Asp265 lines the Mn(2+) pocket. Arg298 serves as a coordination point for ATP. Asp312 provides a ligand contact to substrate.

Belongs to the adenylyl cyclase class-4/guanylyl cyclase family. As to quaternary structure, homodimer. Mn(2+) is required as a cofactor. The cofactor is Mg(2+).

The catalysed reaction is ATP = 3',5'-cyclic AMP + diphosphate. Its function is as follows. Catalyzes the formation of the second messenger cAMP. The chain is pH-sensitive adenylate cyclase MT1302 from Mycobacterium tuberculosis (strain CDC 1551 / Oshkosh).